The chain runs to 402 residues: Pyridinium-3,5-bisthiocarboxylic acid mononucleotide nickel insertion protein (402 aa).

The protein belongs to the LarC family.

The enzyme catalyses Ni(II)-pyridinium-3,5-bisthiocarboxylate mononucleotide = pyridinium-3,5-bisthiocarboxylate mononucleotide + Ni(2+). In terms of biological role, involved in the biosynthesis of a nickel-pincer cofactor ((SCS)Ni(II) pincer complex). Binds Ni(2+), and functions in nickel delivery to pyridinium-3,5-bisthiocarboxylic acid mononucleotide (P2TMN), to form the mature cofactor. Is thus probably required for the activation of nickel-pincer cofactor-dependent enzymes. The sequence is that of Pyridinium-3,5-bisthiocarboxylic acid mononucleotide nickel insertion protein from Thermotoga sp. (strain RQ2).